The following is a 522-amino-acid chain: 2-isopropylmalate synthase (522 aa).

The Pyruvate carboxyltransferase domain occupies 5–267 (VIIFDTTLRD…ETGINAKEIH (263 aa)). Mn(2+) contacts are provided by aspartate 14, histidine 202, histidine 204, and asparagine 238. Positions 392-522 (QLQQLVVQSD…MHKNRELGGV (131 aa)) are regulatory domain.

It belongs to the alpha-IPM synthase/homocitrate synthase family. LeuA type 1 subfamily. In terms of assembly, homodimer. Mn(2+) is required as a cofactor.

It localises to the cytoplasm. The enzyme catalyses 3-methyl-2-oxobutanoate + acetyl-CoA + H2O = (2S)-2-isopropylmalate + CoA + H(+). It functions in the pathway amino-acid biosynthesis; L-leucine biosynthesis; L-leucine from 3-methyl-2-oxobutanoate: step 1/4. Catalyzes the condensation of the acetyl group of acetyl-CoA with 3-methyl-2-oxobutanoate (2-ketoisovalerate) to form 3-carboxy-3-hydroxy-4-methylpentanoate (2-isopropylmalate). This chain is 2-isopropylmalate synthase, found in Shewanella sp. (strain ANA-3).